The primary structure comprises 1501 residues: RE1-silencing transcription factor A (1501 aa).

Residues 158-180 (FRCKPCQYKAESEEEFVHHIKIH) form a C2H2-type 1 zinc finger. Positions 186 to 200 (VDNDSKKNPQGKEAD) are enriched in basic and acidic residues. The segment at 186-209 (VDNDSKKNPQGKEADSSIPEESDI) is disordered. 7 C2H2-type zinc fingers span residues 214–236 (IQCDGCGYNTNRFDHYLAHLKHH), 246–268 (YKCTICTYSTVSEYHWKKHLRNH), 274–296 (YTCSQCSYFSDRKNNYIQHIRTH), 302–324 (YQCIICLYSSSQKTHLTRHMRTH), 330–353 (FKCEQCSYVASNQHEVTRHARQVH), 359–381 (LTCPHCDYKTADRSNFKKHVELH), and 387–410 (FLCPVCDYAASKKCNLQYHIKSRH). 4 disordered regions span residues 491–514 (SSTQKKIKASEVRPEKIVDKSRKS), 569–612 (SFVK…SVAS), 885–929 (PTKV…VPGD), and 1040–1079 (VAAGDEPTSVQPLSREDPKSVQPIGEDQPTSVQPPGGDEQ). 2 stretches are compositionally biased toward basic and acidic residues: residues 498 to 512 (KASEVRPEKIVDKSR) and 594 to 605 (ITEKKEKGKQLD). Polar residues predominate over residues 1067–1079 (QPTSVQPPGGDEQ). The C2H2-type 9 zinc finger occupies 1463–1485 (FVCIFCDRTFRKEEEYTKHLRRH).

It is found in the nucleus. It localises to the cytoplasm. Transcriptional repressor which binds neuron-restrictive silencer element (NRSE) and represses neuronal gene transcription in non-neuronal cells. Plays a role in the early development of the nervous system and is required for proper patterning of the neuroectoderm during gastrulation. This involves the correct speciation of the neuroepithelial domain and adequate development of the non-neural ectoderm. This is RE1-silencing transcription factor A (rest-a) from Xenopus laevis (African clawed frog).